Here is a 129-residue protein sequence, read N- to C-terminus: Small ribosomal subunit protein uS11c (129 aa).

Belongs to the universal ribosomal protein uS11 family. In terms of assembly, part of the 30S ribosomal subunit.

It is found in the plastid. Its subcellular location is the chloroplast. This is Small ribosomal subunit protein uS11c from Gracilaria tenuistipitata var. liui (Red alga).